The primary structure comprises 490 residues: Glutamyl-tRNA(Gln) amidotransferase subunit A (490 aa).

Active-site charge relay system residues include K78 and S153. S177 functions as the Acyl-ester intermediate in the catalytic mechanism.

It belongs to the amidase family. GatA subfamily. Heterotrimer of A, B and C subunits.

The catalysed reaction is L-glutamyl-tRNA(Gln) + L-glutamine + ATP + H2O = L-glutaminyl-tRNA(Gln) + L-glutamate + ADP + phosphate + H(+). In terms of biological role, allows the formation of correctly charged Gln-tRNA(Gln) through the transamidation of misacylated Glu-tRNA(Gln) in organisms which lack glutaminyl-tRNA synthetase. The reaction takes place in the presence of glutamine and ATP through an activated gamma-phospho-Glu-tRNA(Gln). This is Glutamyl-tRNA(Gln) amidotransferase subunit A from Desulforapulum autotrophicum (strain ATCC 43914 / DSM 3382 / VKM B-1955 / HRM2) (Desulfobacterium autotrophicum).